Reading from the N-terminus, the 624-residue chain is Actin-related protein 8 (624 aa).

Position 1 is an N-acetylmethionine (M1). Residues 1–25 (MTQAEKGEAENGKEKGGEKEKEQRG) show a composition bias toward basic and acidic residues. Residues 1–29 (MTQAEKGEAENGKEKGGEKEKEQRGVKRP) form a disordered region. Residues S55 and T56 each contribute to the ATP site. Residue S132 is modified to Phosphoserine. Position 283 to 286 (283 to 286 (DVGD)) interacts with ATP. Position 412 is a phosphoserine (S412). The interval 430-462 (SKQEQSAKATADRKSASKPIGFEGDLRGQSSDL) is disordered.

This sequence belongs to the actin family. ARP8 subfamily. In terms of assembly, component of the chromatin remodeling INO80 complex; specifically part of a complex module associated with the DBINO domain of INO80. Exists as monomers and dimers, but the dimer is most probably the biologically relevant form required for stable interactions with histones that exploits the twofold symmetry of the nucleosome core.

It is found in the nucleus. The protein resides in the chromosome. In terms of biological role, plays an important role in the functional organization of mitotic chromosomes. Exhibits low basal ATPase activity, and unable to polymerize. Its function is as follows. Proposed core component of the chromatin remodeling INO80 complex which is involved in transcriptional regulation, DNA replication and probably DNA repair. Required for the recruitment of INO80 (and probably the INO80 complex) to sites of DNA damage Strongly prefer nucleosomes and H3-H4 tetramers over H2A-H2B dimers, suggesting it may act as a nucleosome recognition module within the complex. This is Actin-related protein 8 (ACTR8) from Bos taurus (Bovine).